A 373-amino-acid polypeptide reads, in one-letter code: MAGWSCLVTGAGGFLGQRIVHLLAEEKELQEIRALDKAFRPELLEEFSKLQSKTKLTMVEGDILDEQCLKRACQGTSVVIHTASVIDVMNVIHRETIMNVNLKGTQLLLEACAQASVPIFIYTSTIEVAGPNSYRDIIQNAHEEEHLESTWSAPYPYSKKLAEKAVLAANGWALKNGGTLHTCALRPMYIYGEGSIFLYNYIYKALRNNGILTHHSKFSIVNPVYVGNVAWAHILALRALQDPKKAPSVQGQFYYISDDTPHQSYDDLNYNLSKEWGFSLDSRMSLPISLEYWLAFLLEIVSFLLSPIYKYQPPFNRHMVTLSNSIFTFSYKKAQRDLGYKPLFSWEEAKQKTTEWIGSLVKQHKETLKTKTH.

The active-site Proton acceptor is Tyr-155. NAD(+) is bound at residue Lys-159. A helical membrane pass occupies residues Ile-288–Ile-308.

The protein belongs to the 3-beta-HSD family.

Its subcellular location is the endoplasmic reticulum membrane. The protein localises to the mitochondrion membrane. It catalyses the reaction a 3beta-hydroxy-Delta(5)-steroid + NAD(+) = a 3-oxo-Delta(5)-steroid + NADH + H(+). The catalysed reaction is a 3-oxo-Delta(5)-steroid = a 3-oxo-Delta(4)-steroid. Its pathway is lipid metabolism; steroid biosynthesis. In terms of biological role, 3-beta-HSD is a bifunctional enzyme, that catalyzes the oxidative conversion of Delta(5)-ene-3-beta-hydroxy steroid, and the oxidative conversion of ketosteroids. The 3-beta-HSD enzymatic system plays a crucial role in the biosynthesis of all classes of hormonal steroids. This chain is 3 beta-hydroxysteroid dehydrogenase/Delta 5--&gt;4-isomerase (HSD3B), found in Canis lupus familiaris (Dog).